We begin with the raw amino-acid sequence, 290 residues long: uncharacterized protein (290 aa).

A coiled-coil region spans residues 161–216 (SNQREVESLEQLVHEQLNKLNTESKMEFENRKNDTKNEVQQLSARIVELHNLLAVS). A helical membrane pass occupies residues 236–256 (AGVVMAFTGFLVLVIPFGLGV).

The protein resides in the mitochondrion membrane. This is an uncharacterized protein from Schizosaccharomyces pombe (strain 972 / ATCC 24843) (Fission yeast).